A 346-amino-acid polypeptide reads, in one-letter code: tRNA N6-adenosine threonylcarbamoyltransferase (346 aa).

Residues His-120, His-124, and Tyr-141 each contribute to the a divalent metal cation site. Substrate is bound by residues 141–145 (YVSGG), Asp-173, Gly-188, Glu-192, and Asn-277. Asp-305 serves as a coordination point for a divalent metal cation.

The protein belongs to the KAE1 / TsaD family. Component of the EKC/KEOPS complex composed of at least BUD32, CGI121, GON7, KAE1 and PCC1; the whole complex dimerizes. Requires a divalent metal cation as cofactor.

The protein resides in the cytoplasm. The protein localises to the nucleus. It catalyses the reaction L-threonylcarbamoyladenylate + adenosine(37) in tRNA = N(6)-L-threonylcarbamoyladenosine(37) in tRNA + AMP + H(+). In terms of biological role, component of the EKC/KEOPS complex that is required for the formation of a threonylcarbamoyl group on adenosine at position 37 (t(6)A37) in tRNAs that read codons beginning with adenine. The complex is probably involved in the transfer of the threonylcarbamoyl moiety of threonylcarbamoyl-AMP (TC-AMP) to the N6 group of A37. KAE1 likely plays a direct catalytic role in this reaction, but requires other protein(s) of the complex to fulfill this activity. The EKC/KEOPS complex also promotes both telomere uncapping and telomere elongation. The complex is required for efficient recruitment of transcriptional coactivators. In Gibberella zeae (strain ATCC MYA-4620 / CBS 123657 / FGSC 9075 / NRRL 31084 / PH-1) (Wheat head blight fungus), this protein is tRNA N6-adenosine threonylcarbamoyltransferase.